The sequence spans 519 residues: MMRCGEGYPGLILAKEDFIMKPVDMAAADINAEYLGVPRLSLMENAGRAVAEEIGNAVDSGRVAIFCGPGGNGGDGFVAARHLLNMGFEVEVHLLGHPERIGSEEALVNWGVLGAMQPHPGGFSVDFVRDSSEIKPTDADVVVDAILGTGVRGSIREPSRSAIEIINRSEAFRVSVDIPSGLNPETGAVEDIAVSADLTVTFHRMKDGLKLADPAVTGEIVVRDIGIPPAAEIFMGPGDLLRIPSRRPGSHKGENGRVLIIGGSRQYSGAPAIAAKAALRAGADIVMVAAPGSAARAIRSLSPDLIVRELEGGYIGMESLDEILELAEKADSVLMGCGAGRETSTARTFMRAIEDLHEMEKPIVLDADALRLMDYSDVSEYRELTVTPHMAEFSSFFKLKSMIFNDFRESVSAFQSISSRIRGTVLLKGRIDMIFQGDRLRLNKTGCPGMTVGGTGDALAGLTAGLRALGLSSFDSASLAAFINGMAGELAMERHGNGFTASDMVDMIPSVMDPGFYGF.

The NAD(P)H-hydrate epimerase stretch occupies residues 1 to 233 (MMRCGEGYPG…DIGIPPAAEI (233 aa)). Residues 25–233 (MAAADINAEY…DIGIPPAAEI (209 aa)) form the YjeF N-terminal domain. Residues 71–75 (GNGGD) are NADPHX 1; for epimerase activity. Residues Asn72 and Asp144 each contribute to the K(+) site. Positions 148–154 (GTGVRGS) are NADPHX 1; for epimerase activity. Asp177 provides a ligand contact to (6S)-NADPHX. Residue Ser180 participates in K(+) binding. A YjeF C-terminal domain is found at 235–515 (MGPGDLLRIP…DMIPSVMDPG (281 aa)). The interval 235-519 (MGPGDLLRIP…SVMDPGFYGF (285 aa)) is ADP-dependent (S)-NAD(P)H-hydrate dehydratase. Position 338 (Gly338) interacts with (6S)-NADPHX. The interval 389–395 (HMAEFSS) is NADPHX 2; for dehydratase activity. Residues 428-432 (KGRID) and 447-456 (CPGMTVGGTG) contribute to the ADP site. Asp457 is a (6S)-NADPHX binding site.

It in the N-terminal section; belongs to the NnrE/AIBP family. This sequence in the C-terminal section; belongs to the NnrD/CARKD family. Requires K(+) as cofactor.

It carries out the reaction (6S)-NADHX + ADP = AMP + phosphate + NADH + H(+). It catalyses the reaction (6S)-NADPHX + ADP = AMP + phosphate + NADPH + H(+). The catalysed reaction is (6R)-NADHX = (6S)-NADHX. The enzyme catalyses (6R)-NADPHX = (6S)-NADPHX. Bifunctional enzyme that catalyzes the epimerization of the S- and R-forms of NAD(P)HX and the dehydration of the S-form of NAD(P)HX at the expense of ADP, which is converted to AMP. This allows the repair of both epimers of NAD(P)HX, a damaged form of NAD(P)H that is a result of enzymatic or heat-dependent hydration. This Methanothermobacter thermautotrophicus (strain ATCC 29096 / DSM 1053 / JCM 10044 / NBRC 100330 / Delta H) (Methanobacterium thermoautotrophicum) protein is Bifunctional NAD(P)H-hydrate repair enzyme Nnr (nnr).